A 1415-amino-acid chain; its full sequence is DNA-directed RNA polymerase subunit beta' (1415 aa).

Zn(2+)-binding residues include C72, C74, C87, and C90. Residues D463, D465, and D467 each coordinate Mg(2+). Zn(2+) is bound by residues C811, C885, C892, and C895.

It belongs to the RNA polymerase beta' chain family. The RNAP catalytic core consists of 2 alpha, 1 beta, 1 beta' and 1 omega subunit. When a sigma factor is associated with the core the holoenzyme is formed, which can initiate transcription. Requires Mg(2+) as cofactor. The cofactor is Zn(2+).

The enzyme catalyses RNA(n) + a ribonucleoside 5'-triphosphate = RNA(n+1) + diphosphate. In terms of biological role, DNA-dependent RNA polymerase catalyzes the transcription of DNA into RNA using the four ribonucleoside triphosphates as substrates. The sequence is that of DNA-directed RNA polymerase subunit beta' from Cereibacter sphaeroides (strain ATCC 17025 / ATH 2.4.3) (Rhodobacter sphaeroides).